Consider the following 306-residue polypeptide: MQRLGPFSTLYGRVLAPLPGRAGGAASGGGGNSWGVLGSHVQPPGRAQFGVGSTSTSSGDANSVCPAPSTMSKAEEAKKLAGRAAVENHVRNNQVLGIGSGSTIVHAVQRIAERVKQENLNLICIPTSFQARQLILQHGLTLSDLDRHPEIDLAIDGADEVDADLNLIKGGGGCLTQEKIVAGNASRFIVIADFRKDSKNLGDQWHKGIPIEVIPMAYVPVSRTVTQKFGGVIELRMAVNKAGPVVTDNGNFILDWKFDRVHKWSEVNTAITMIPGVVDTGLFINMAERVYFGMQDGSVNMREKPF.

Residues 45-68 (GRAQFGVGSTSTSSGDANSVCPAP) are disordered. A compositionally biased stretch (polar residues) spans 51-61 (VGSTSTSSGDA). The residue at position 102 (Ser-102) is a Phosphoserine.

This sequence belongs to the ribose 5-phosphate isomerase family.

The enzyme catalyses aldehydo-D-ribose 5-phosphate = D-ribulose 5-phosphate. The protein operates within carbohydrate degradation; pentose phosphate pathway; D-ribose 5-phosphate from D-ribulose 5-phosphate (non-oxidative stage): step 1/1. This Sus scrofa (Pig) protein is Ribose-5-phosphate isomerase.